Here is a 438-residue protein sequence, read N- to C-terminus: Chromosomal replication initiator protein DnaA (438 aa).

A domain I, interacts with DnaA modulators region spans residues 1-71; the sequence is MTELDSLWEA…VEIVYQRTGQ (71 aa). The segment at 71 to 101 is domain II; it reads QEIRPDYVLATDPTPLAQTPPRPQSTFKEET. Positions 81-100 are disordered; sequence TDPTPLAQTPPRPQSTFKEE. The interval 102–318 is domain III, AAA+ region; that stretch reads PLNPEYTFQT…GALMRIRVFS (217 aa). Gly-146, Gly-148, Lys-149, and Thr-150 together coordinate ATP. The domain IV, binds dsDNA stretch occupies residues 319–438; that stretch reads ELHQQPITLK…LVKLKNDLQA (120 aa).

This sequence belongs to the DnaA family. Oligomerizes as a right-handed, spiral filament on DNA at oriC.

It localises to the cytoplasm. Its function is as follows. Plays an essential role in the initiation and regulation of chromosomal replication. ATP-DnaA binds to the origin of replication (oriC) to initiate formation of the DNA replication initiation complex once per cell cycle. Binds the DnaA box (a 9 base pair repeat at the origin) and separates the double-stranded (ds)DNA. Forms a right-handed helical filament on oriC DNA; dsDNA binds to the exterior of the filament while single-stranded (ss)DNA is stabiized in the filament's interior. The ATP-DnaA-oriC complex binds and stabilizes one strand of the AT-rich DNA unwinding element (DUE), permitting loading of DNA polymerase. After initiation quickly degrades to an ADP-DnaA complex that is not apt for DNA replication. Binds acidic phospholipids. In Limosilactobacillus fermentum (strain NBRC 3956 / LMG 18251) (Lactobacillus fermentum), this protein is Chromosomal replication initiator protein DnaA.